Consider the following 700-residue polypeptide: Polyribonucleotide nucleotidyltransferase (700 aa).

Residues D485 and D491 each contribute to the Mg(2+) site. In terms of domain architecture, KH spans P552–I611. An S1 motif domain is found at G621–K689.

It belongs to the polyribonucleotide nucleotidyltransferase family. Component of the RNA degradosome, which is a multiprotein complex involved in RNA processing and mRNA degradation. Mg(2+) is required as a cofactor.

The protein localises to the cytoplasm. The enzyme catalyses RNA(n+1) + phosphate = RNA(n) + a ribonucleoside 5'-diphosphate. Its function is as follows. Involved in mRNA degradation. Catalyzes the phosphorolysis of single-stranded polyribonucleotides processively in the 3'- to 5'-direction. The polypeptide is Polyribonucleotide nucleotidyltransferase (Shewanella baltica (strain OS185)).